We begin with the raw amino-acid sequence, 289 residues long: Glycerol facilitator-aquaporin gla (289 aa).

2 consecutive transmembrane segments (helical) span residues 10–30 (ITEF…VANV) and 41–61 (SWMI…VAFG). The NPA 1 signature appears at 68 to 70 (NPA). Transmembrane regions (helical) follow at residues 87–107 (AQYI…IVMV), 151–171 (FLGS…FFGS), and 209–229 (MIAH…LGGP). The short motif at 235-237 (NPA) is the NPA 2 element. The helical transmembrane segment at 264–284 (WYAWVPVLAPILASLAAVALF) threads the bilayer.

It belongs to the MIP/aquaporin (TC 1.A.8) family.

Its subcellular location is the cell membrane. Its function is as follows. Mixed channel protein that transports both water and glycerol. This chain is Glycerol facilitator-aquaporin gla (gla), found in Lactococcus lactis subsp. cremoris (Streptococcus cremoris).